A 53-amino-acid chain; its full sequence is MSPQTETKASVGFKAGVKDYKLTYYTPDYETKDTDILAAFRVTPQPGVPPEEA.

A propeptide spanning residues 1–2 is cleaved from the precursor; that stretch reads MS. Position 3 is an N-acetylproline (Pro3). Position 14 is an N6,N6,N6-trimethyllysine (Lys14).

The protein belongs to the RuBisCO large chain family. Type I subfamily. Heterohexadecamer of 8 large chains and 8 small chains.

It localises to the plastid. Its subcellular location is the chloroplast. It carries out the reaction 2 (2R)-3-phosphoglycerate + 2 H(+) = D-ribulose 1,5-bisphosphate + CO2 + H2O. The catalysed reaction is D-ribulose 1,5-bisphosphate + O2 = 2-phosphoglycolate + (2R)-3-phosphoglycerate + 2 H(+). Its function is as follows. RuBisCO catalyzes two reactions: the carboxylation of D-ribulose 1,5-bisphosphate, the primary event in carbon dioxide fixation, as well as the oxidative fragmentation of the pentose substrate in the photorespiration process. Both reactions occur simultaneously and in competition at the same active site. This is Ribulose bisphosphate carboxylase large chain (rbcL) from Malus domestica (Apple).